A 511-amino-acid polypeptide reads, in one-letter code: DEP domain-containing protein 7 (511 aa).

In terms of domain architecture, DEP spans 46–136; the sequence is LQTQVEVKKR…SSCSLYRFTT (91 aa).

The protein belongs to the DEPDC7 family.

The polypeptide is DEP domain-containing protein 7 (Depdc7) (Rattus norvegicus (Rat)).